A 461-amino-acid chain; its full sequence is Ribitol-5-phosphate transferase FKTN (461 aa).

Residues 1 to 7 lie on the Cytoplasmic side of the membrane; sequence MSRINKN. The required and sufficient for interaction with POMGNT1 stretch occupies residues 6 to 27; that stretch reads KNVVLALLTLTSSAFLLFQLYY. The chain crosses the membrane as a helical; Signal-anchor for type II membrane protein span at residues 8–28; that stretch reads VVLALLTLTSSAFLLFQLYYY. Topologically, residues 29–461 are lumenal; that stretch reads KHYLSTKNGA…SEWDEVIQLY (433 aa). Residue Asn-92 is glycosylated (N-linked (GlcNAc...) asparagine).

The protein belongs to the LicD transferase family. Forms a complex composed of FKTN/fukutin, FKRP and RXYLT1/TMEM5. Interacts (via transmembrane domain) with POMGNT1; the interaction is direct and is required for normal POMGNT1 location in Golgi membranes. Expressed in the retina (at protein level). Widely expressed with highest expression in brain, heart, pancreas and skeletal muscle. Expressed at similar levels in control fetal and adult brain. Expressed in migrating neurons, including Cajar-Retzius cells and adult cortical neurons, as well as hippocampal pyramidal cells and cerebellar Purkinje cells. No expression observed in the glia limitans, the subpial astrocytes (which contribute to basement membrane formation) or other glial cells.

It is found in the golgi apparatus membrane. The protein localises to the cytoplasm. Its subcellular location is the nucleus. The catalysed reaction is 3-O-[beta-D-GalNAc-(1-&gt;3)-beta-D-GlcNAc-(1-&gt;4)-(O-6-P-alpha-D-Man)]-Thr-[protein] + CDP-L-ribitol = 3-O-[Rib-ol-P-3-beta-D-GalNAc-(1-&gt;3)-beta-D-GlcNAc-(1-&gt;4)-(O-6-P-alpha-D-Man)]-Thr-[protein] + CMP + H(+). Its pathway is protein modification; protein glycosylation. Catalyzes the transfer of a ribitol-phosphate from CDP-ribitol to the distal N-acetylgalactosamine of the phosphorylated O-mannosyl trisaccharide (N-acetylgalactosamine-beta-3-N-acetylglucosamine-beta-4-(phosphate-6-)mannose), a carbohydrate structure present in alpha-dystroglycan (DAG1). This constitutes the first step in the formation of the ribitol 5-phosphate tandem repeat which links the phosphorylated O-mannosyl trisaccharide to the ligand binding moiety composed of repeats of 3-xylosyl-alpha-1,3-glucuronic acid-beta-1. Required for normal location of POMGNT1 in Golgi membranes, and for normal POMGNT1 activity. May interact with and reinforce a large complex encompassing the outside and inside of muscle membranes. Could be involved in brain development. This Homo sapiens (Human) protein is Ribitol-5-phosphate transferase FKTN.